A 465-amino-acid polypeptide reads, in one-letter code: tRNA (guanine(37)-N(1))-methyltransferase (465 aa).

Residues His189, 227–228 (DL), and 255–256 (DA) each bind S-adenosyl-L-methionine. The disordered stretch occupies residues 283 to 362 (YPKEGVPANE…GPGPPPSKPW (80 aa)). Positions 291 to 320 (NENSSSNGNHNDVREGSQNGANESSVASTT) are enriched in polar residues. Residues 343–352 (TKRRNNKRVR) show a composition bias toward basic residues. Asn371 contributes to the S-adenosyl-L-methionine binding site.

The protein belongs to the class I-like SAM-binding methyltransferase superfamily. TRM5/TYW2 family. In terms of assembly, monomer.

Its subcellular location is the mitochondrion matrix. It localises to the nucleus. The protein localises to the cytoplasm. It catalyses the reaction guanosine(37) in tRNA + S-adenosyl-L-methionine = N(1)-methylguanosine(37) in tRNA + S-adenosyl-L-homocysteine + H(+). Its function is as follows. Specifically methylates the N1 position of guanosine-37 in various cytoplasmic and mitochondrial tRNAs. Methylation is not dependent on the nature of the nucleoside 5' of the target nucleoside. This is the first step in the biosynthesis of wybutosine (yW), a modified base adjacent to the anticodon of tRNAs and required for accurate decoding. This Sorghum bicolor (Sorghum) protein is tRNA (guanine(37)-N(1))-methyltransferase.